A 377-amino-acid polypeptide reads, in one-letter code: TelA-like protein SSP1345 (377 aa).

Over residues 1–18 (MAREQDSINSHPLDKYID) the composition is skewed to basic and acidic residues. The interval 1 to 39 (MAREQDSINSHPLDKYIDENSANESEIIKSSSQFSHEDQ) is disordered. The segment covering 20–34 (NSANESEIIKSSSQF) has biased composition (polar residues).

Belongs to the TelA family.

This Staphylococcus saprophyticus subsp. saprophyticus (strain ATCC 15305 / DSM 20229 / NCIMB 8711 / NCTC 7292 / S-41) protein is TelA-like protein SSP1345.